The primary structure comprises 620 residues: MSHILVNVAWPYANGPRHIGHVAGFGVPSDVYARYERMKGNDVLMVSGTDEHGTPILVEADKEGVSAQELANRYNRVIAKDLCDLGLSYDLFTRTTTGNHEKVVQELFKQCLENGYIYKGTQKVAISPSTGRTLPDRYIEGTCPICGADGARGDQCDACGNELDPDELLNPVSKINGETPRFEETEHFFLDLPALAEANLAWLKTREGWRTNVINFSIGLFKEVKPRAITRDIDWGIPVPVKGWIDNPNKKLYVWFDAVIGYLSASIEWARRKGDPEAWRAWWNDPTTPGYYFMGKDNITFHSQIWPSEMLAYNGQGSKGGETGKLGPLNMPEQVVASEFMTMEGKKFSSSRGIVIYVKDILARYPVDAVRYYISVAGPESSDSDFTWAEFVRHNNEELAASWGNLVNRVANLINKNFGEIPAFDEASATDEDRALLAETKAAFETVGGLIENHRQKNALSEAMRVVGDINKYISATEPWKIKDNPARLGTVLHTAAQAVSDANHLLAPFLPHSAQKVWEALGGTGVFSPLPRLEEVEDLDKPGFTYPIITGDYKLGETVHPWASEPIVAGTSVPKPHPIFAKIPPEAVEEELARFDAELKARREAEAARLAAEKAKLEG.

The 'HIGH' region signature appears at 11-21 (PYANGPRHIGH). 4 residues coordinate Zn(2+): Cys-143, Cys-146, Cys-156, and Cys-159. The 'KMSKS' region motif lies at 347-351 (KFSSS). Position 350 (Ser-350) interacts with ATP.

It belongs to the class-I aminoacyl-tRNA synthetase family. MetG type 1 subfamily. Monomer. Zn(2+) is required as a cofactor.

The protein localises to the cytoplasm. It carries out the reaction tRNA(Met) + L-methionine + ATP = L-methionyl-tRNA(Met) + AMP + diphosphate. Its function is as follows. Is required not only for elongation of protein synthesis but also for the initiation of all mRNA translation through initiator tRNA(fMet) aminoacylation. The chain is Methionine--tRNA ligase from Bifidobacterium adolescentis (strain ATCC 15703 / DSM 20083 / NCTC 11814 / E194a).